A 224-amino-acid chain; its full sequence is Ribonuclease 3 (224 aa).

In terms of domain architecture, RNase III spans 5 to 127 (LERLCRRLNY…ILAAIYLDGG (123 aa)). Glutamate 40 lines the Mg(2+) pocket. Aspartate 44 is a catalytic residue. Mg(2+) contacts are provided by aspartate 113 and glutamate 116. Glutamate 116 is an active-site residue. In terms of domain architecture, DRBM spans 154 to 224 (DAKTQLQEFL…AKAMLEQLQG (71 aa)).

This sequence belongs to the ribonuclease III family. Homodimer. Requires Mg(2+) as cofactor.

Its subcellular location is the cytoplasm. It catalyses the reaction Endonucleolytic cleavage to 5'-phosphomonoester.. Functionally, digests double-stranded RNA. Involved in the processing of primary rRNA transcript to yield the immediate precursors to the large and small rRNAs (23S and 16S). Processes some mRNAs, and tRNAs when they are encoded in the rRNA operon. Processes pre-crRNA and tracrRNA of type II CRISPR loci if present in the organism. This chain is Ribonuclease 3, found in Legionella pneumophila (strain Paris).